Here is a 677-residue protein sequence, read N- to C-terminus: O-fucosyltransferase 27 (677 aa).

Residues 15–35 (WIGLLGLVLSAFSLLVHFLLA) traverse the membrane as a helical; Signal-anchor for type II membrane protein segment. The N-linked (GlcNAc...) asparagine glycan is linked to Asn130. A disordered region spans residues 410-437 (PPSIEVETKHDSLKSTRQRPQPLPPPPA). 2 N-linked (GlcNAc...) asparagine glycosylation sites follow: Asn542 and Asn592. The interval 619 to 677 (NAEKEEDLDEEDLSSSGLFFGHKESGGNNNGNNETVNSEANNKEEGQLEDQEELEGSER) is disordered. Residues 622–631 (KEEDLDEEDL) are compositionally biased toward acidic residues. Residues 644–658 (GGNNNGNNETVNSEA) show a composition bias toward low complexity. Residue Asn651 is glycosylated (N-linked (GlcNAc...) asparagine). Residues 665–677 (QLEDQEELEGSER) are compositionally biased toward acidic residues.

The protein belongs to the glycosyltransferase GT106 family.

It is found in the membrane. It functions in the pathway glycan metabolism. In Arabidopsis thaliana (Mouse-ear cress), this protein is O-fucosyltransferase 27.